The chain runs to 444 residues: UDP-N-acetylmuramoylalanine--D-glutamate ligase (444 aa).

109–115 serves as a coordination point for ATP; it reads GSNGKTT.

It belongs to the MurCDEF family.

The protein resides in the cytoplasm. The enzyme catalyses UDP-N-acetyl-alpha-D-muramoyl-L-alanine + D-glutamate + ATP = UDP-N-acetyl-alpha-D-muramoyl-L-alanyl-D-glutamate + ADP + phosphate + H(+). It participates in cell wall biogenesis; peptidoglycan biosynthesis. In terms of biological role, cell wall formation. Catalyzes the addition of glutamate to the nucleotide precursor UDP-N-acetylmuramoyl-L-alanine (UMA). This chain is UDP-N-acetylmuramoylalanine--D-glutamate ligase, found in Bacteroides fragilis (strain ATCC 25285 / DSM 2151 / CCUG 4856 / JCM 11019 / LMG 10263 / NCTC 9343 / Onslow / VPI 2553 / EN-2).